Reading from the N-terminus, the 1683-residue chain is MSNVSTASGTHFAPPQADRSVTEEVDRVNSRPDELENQEVLRQLPENGNLTSSLQREKRRTPNGKEAERKHALPKSFVDRNLSDVSPNHSLDHIMHSNEHDPRRGSDEENMHRLYNNLHSSNNNVHSKRNSKREEERAPQRRSSSVAYTQQQFNGWKKEFGHAFKKISAIGRLKSSVNSPTPAGSGHRHNQHQHQQVNEEDLYTQRLASDLLDSLLAGCPASLFASTQFLRDEHGKRRAPLLLAKLDVRVSPLKNDNNILDITNSNHNHRGNNNNNTGENSDRRPSIPRSSSIISISSNVAEFMYSRNENSLFRIHLEYGIDEDRLKWSIIRSYKDIKSLHHKLKIVAFQQLTISKLYSDNNRYHSLQLPHFPHYKEMVKERNVMEKKAENKPSSAASAPHTSENNNNDNGSNITSLETLSSSEISEFNIDNVKMKHLQDLIDEPDDFSQPIHLRLERYLRLLNIALCLRPHANRLFEFYELSPLGNLLSRESGFQGKQGYLVIRSTAKAQGWRVSHFGKHAFKDMIDRHTTKWFLVRNSYLTYVSDLSSTTPLDVFLIDWKFKVRFSGNKNNILDNENEINWIIHDPNLEINDELEEFGIENDANNILDKNGKSKTHQKKSNISSKLLLLTLENSERKLKIICKSESSLKQWMSSIIKMSTSTPWSKPNRFGSFAPVRTNSFCKFLVDGRDYFWSLSEALLMAKDVIYIHDWWLSPELYLRRPVKGNQGFRIDRMLKSCAEKGIKIFIVIYRNVGNIVGTDSLWTKHSMLNLHPNIHIIRSPNQWLQNTYFWAHHEKFVVIDETFAFIGGTDLCYGRYDTFEHVLRDDAESLLDQNFPGKDYSNARIADFHDLDKPFESMYDRKVIPRMPWHDVQMMTLGEPARDLARHFVQRWNYLLRAKRPSRLTPLLTPPSDLTAEELKSLPMFEILREKSTCETQILRSAGNWSLGLKETECSIQNAYLKLIEQSEHFIYIENQFFITSTVWNGTCVLNKIGDALVDRIVKANQEKKPWKAFILIPLMPGFDSPVDTAEASSLRLIMQFQYQSISRGEHSTFSKLKKLNIDPAQYIQFFSLRKWSTFAPNERLITEQLYVHAKILIADDRRCIIGSANINERSQLGNRDSEVAILIRDTDLIKTKMNGDDYYAGKFPWELRQRLMREHLGCDVDLVEFVEKKFERFEKFAAKNYEKLHTLSKEGDSGNNWSDREMIDSAMIELGYREIFGCKFSPQWKSGHGNSVDDGSTQCGINEKEVGREDENVYEKFFNSVDYGKSSRKRTPLPKHNFASLGLTFNHRAGIENVGIRDHKVLSTDPRLRKNDEHKKEVDGYGPDCWKKESNKKFKADATEQLKEWALNSLASKVLDDKEMIKSEIPEGFSNYLPNEKDLEMYLTDKTVTNRNKWSMLKRICYLQYLSHKLDERKTQRLKKIKDMRRHLSSSTESTRNGSNSLPLNEKSNEGESTNVDQDIEGDEYHRLHEDILKNQELDDGSLDDLLSQIIPKITNFNSGEIDDAKKEELLKLNFIDPYSFEDPLISSFSEGLWFTIALRNTLLYKLVFHCQPDNAVQNWKEYGEFTELEQEFQINQEKLIDLEAENINSTTTNVVDKDREKEKMRKAAELRMKLSGSLLYGFNQKVFDKHTAQRILERIHGHLVIFPTEWLAKEVESRNWIFNSDRLSPMEIYN.

4 disordered regions span residues 1-150 (MSNV…AYTQ), 173-198 (LKSS…QQVN), 259-289 (ILDI…SIPR), and 384-416 (VMEK…NITS). N-acetylserine is present on Ser2. Phosphoserine is present on residues Ser8 and Ser30. 3 stretches are compositionally biased toward basic and acidic residues: residues 20–34 (SVTE…RPDE), 63–82 (NGKE…DRNL), and 90–112 (SLDH…ENMH). Positions 116–125 (NNLHSSNNNV) are enriched in low complexity. Residues 141–150 (RRSSSVAYTQ) show a composition bias toward polar residues. Position 145 is a phosphoserine (Ser145). A compositionally biased stretch (low complexity) spans 263–279 (TNSNHNHRGNNNNNTGE). The 197-residue stretch at 291 to 487 (SSIISISSNV…EFYELSPLGN (197 aa)) folds into the PX domain. The segment covering 392–404 (KPSSAASAPHTSE) has biased composition (polar residues). Residues 405 to 416 (NNNNDNGSNITS) show a composition bias toward low complexity. One can recognise a PH domain in the interval 496–664 (QGKQGYLVIR…SSIIKMSTST (169 aa)). PLD phosphodiesterase domains are found at residues 791–818 (YFWA…CYGR) and 1091–1118 (EQLY…NERS). Residues His796, Lys798, Asp803, His1096, Lys1098, and Asp1103 contribute to the active site. Residues 1430 to 1465 (KDMRRHLSSSTESTRNGSNSLPLNEKSNEGESTNVD) are disordered. Residues 1437-1451 (SSSTESTRNGSNSLP) show a composition bias toward polar residues. Ser1461 is subject to Phosphoserine. Thr1462 is subject to Phosphothreonine.

It belongs to the phospholipase D family. Interacts with SRF1.

The enzyme catalyses a 1,2-diacyl-sn-glycero-3-phosphocholine + H2O = a 1,2-diacyl-sn-glycero-3-phosphate + choline + H(+). Activity is dependent of phosphatidylinositol 4,5-bisphosphate and the regulator SRF1. Inhibited by magnesium. Its function is as follows. Required for meiosis and spore formation. Seems to be involved in the coordinate induction of late meiotic events. PLD activity is induced under sporulation conditions and seems to be necessary to complete the meiotic cycle, but not for vegetative cell growth. The protein is Phospholipase D1 (SPO14) of Saccharomyces cerevisiae (strain ATCC 204508 / S288c) (Baker's yeast).